We begin with the raw amino-acid sequence, 653 residues long: 23S rRNA 5-hydroxycytidine C2501 synthase (653 aa).

The protein belongs to the peptidase U32 family. As to quaternary structure, interacts with precursors of the 50S ribosomal subunit.

With respect to regulation, iron-sulfur clusters and prephenate are required for ho5C2501 formation. Functionally, responsible for the formation of the 5-hydroxycytidine modification at the C2501 position (ho5C2501) of 23S rRNA. May be a Fe-S protein that catalyzes ho5C2501 formation using prephenate as a hydroxyl group donor. This Escherichia coli (strain K12) protein is 23S rRNA 5-hydroxycytidine C2501 synthase.